A 41-amino-acid chain; its full sequence is Large ribosomal subunit protein bL36B (41 aa).

Belongs to the bacterial ribosomal protein bL36 family.

In Neisseria meningitidis serogroup B (strain ATCC BAA-335 / MC58), this protein is Large ribosomal subunit protein bL36B.